A 160-amino-acid chain; its full sequence is Transcription antitermination protein NusB (160 aa).

This sequence belongs to the NusB family.

Involved in transcription antitermination. Required for transcription of ribosomal RNA (rRNA) genes. Binds specifically to the boxA antiterminator sequence of the ribosomal RNA (rrn) operons. The sequence is that of Transcription antitermination protein NusB from Rhizobium meliloti (strain 1021) (Ensifer meliloti).